Here is a 208-residue protein sequence, read N- to C-terminus: ATP-dependent Clp protease proteolytic subunit (208 aa).

Ser105 (nucleophile) is an active-site residue. The active site involves His130.

It belongs to the peptidase S14 family. In terms of assembly, fourteen ClpP subunits assemble into 2 heptameric rings which stack back to back to give a disk-like structure with a central cavity, resembling the structure of eukaryotic proteasomes.

It is found in the cytoplasm. It catalyses the reaction Hydrolysis of proteins to small peptides in the presence of ATP and magnesium. alpha-casein is the usual test substrate. In the absence of ATP, only oligopeptides shorter than five residues are hydrolyzed (such as succinyl-Leu-Tyr-|-NHMec, and Leu-Tyr-Leu-|-Tyr-Trp, in which cleavage of the -Tyr-|-Leu- and -Tyr-|-Trp bonds also occurs).. Its function is as follows. Cleaves peptides in various proteins in a process that requires ATP hydrolysis. Has a chymotrypsin-like activity. Plays a major role in the degradation of misfolded proteins. The protein is ATP-dependent Clp protease proteolytic subunit of Xylella fastidiosa (strain 9a5c).